The sequence spans 111 residues: Probable 4-amino-4-deoxy-L-arabinose-phosphoundecaprenol flippase subunit ArnE (111 aa).

Residues 1-35 (MIWLTLVFASLLSVAGQLCQKQATCFAAVNKRRKH) lie on the Cytoplasmic side of the membrane. The chain crosses the membrane as a helical span at residues 36 to 56 (IVLWLGLALACLGLAMVLWLL). Positions 40-109 (LGLALACLGL…IIGGIVILGS (70 aa)) constitute an EamA domain. Over 57–60 (VLQN) the chain is Periplasmic. A helical transmembrane segment spans residues 61–81 (VPVGIAYPMLSLNFVWVTLAA). Over 82–87 (VKLWHE) the chain is Cytoplasmic. Residues 88–108 (PVSLRHWCGLAFIIGGIVILG) form a helical membrane-spanning segment. Topologically, residues 109 to 111 (STV) are periplasmic.

Belongs to the ArnE family. As to quaternary structure, heterodimer of ArnE and ArnF.

It is found in the cell inner membrane. It participates in bacterial outer membrane biogenesis; lipopolysaccharide biosynthesis. Translocates 4-amino-4-deoxy-L-arabinose-phosphoundecaprenol (alpha-L-Ara4N-phosphoundecaprenol) from the cytoplasmic to the periplasmic side of the inner membrane. In Escherichia coli O81 (strain ED1a), this protein is Probable 4-amino-4-deoxy-L-arabinose-phosphoundecaprenol flippase subunit ArnE.